The following is a 197-amino-acid chain: dITP/XTP pyrophosphatase (197 aa).

8-13 (TKNKGK) is a substrate binding site. Glu-42 and Asp-71 together coordinate Mg(2+). Asp-71 serves as the catalytic Proton acceptor. Residues Ser-72, 154–157 (FGYD), Lys-177, and 182–183 (HR) contribute to the substrate site.

It belongs to the HAM1 NTPase family. Homodimer. It depends on Mg(2+) as a cofactor.

The enzyme catalyses XTP + H2O = XMP + diphosphate + H(+). It catalyses the reaction dITP + H2O = dIMP + diphosphate + H(+). The catalysed reaction is ITP + H2O = IMP + diphosphate + H(+). Pyrophosphatase that catalyzes the hydrolysis of nucleoside triphosphates to their monophosphate derivatives, with a high preference for the non-canonical purine nucleotides XTP (xanthosine triphosphate), dITP (deoxyinosine triphosphate) and ITP. Seems to function as a house-cleaning enzyme that removes non-canonical purine nucleotides from the nucleotide pool, thus preventing their incorporation into DNA/RNA and avoiding chromosomal lesions. The chain is dITP/XTP pyrophosphatase from Oceanobacillus iheyensis (strain DSM 14371 / CIP 107618 / JCM 11309 / KCTC 3954 / HTE831).